A 502-amino-acid chain; its full sequence is Actin nucleation-promoting factor WAS (502 aa).

Residues 39–148 enclose the WH1 domain; that stretch reads LGRKCLTLAT…ALVQEKIQKR (110 aa). The tract at residues 146 to 240 is disordered; sequence QKRNQRQSGD…KKISKADIGA (95 aa). Residues 201–211 show a composition bias toward polar residues; sequence DIQNPDITSSR. Ser-221 carries the post-translational modification Phosphoserine. A CRIB domain is found at 238-251; that stretch reads IGAPSGFKHVSHVG. Tyr-291 is subject to Phosphotyrosine; by FYN and HCK. Residues 307–502 form a disordered region; it reads MRRQEPLPPP…DEDEDDEWDD (196 aa). GRSGPLPPXP motif repeat units lie at residues 337-346 and 376-385; these read GRSGPLPPVP and GRSGPLPPPP. The span at 341-419 shows a compositional bias: pro residues; the sequence is PLPPVPLGIA…PAPPPLPPAL (79 aa). Positions 430–447 constitute a WH2 domain; the sequence is GRGALLDQIRQGIQLNKT. Residues Ser-483 and Ser-484 each carry the phosphoserine; by CK2 modification. A compositionally biased stretch (acidic residues) spans 486–502; that stretch reads EGEDQAGDEDEDDEWDD.

Binds the Arp2/3 complex. Interacts with CDC42, RAC, NCK, HCK, FYN, SRC kinase FGR, BTK, ABL1, PSTPIP1, WIP, and to the p85 subunit of PLC-gamma. Interacts (via C-terminus) with ALDOA. Interacts with NCK1 (via SH3 domains). Interacts with FCHSD2. As to quaternary structure, (Microbial infection) Interacts with E.coli effector protein EspF(U). In terms of processing, phosphorylated at Tyr-291 by FYN and HCK, inducing WAS effector activity after TCR engagement. Phosphorylation at Tyr-291 enhances WAS activity in promoting actin polymerization and filopodia formation. Expressed predominantly in the thymus. Also found, to a much lesser extent, in the spleen.

The protein resides in the cytoplasm. It localises to the cytoskeleton. The protein localises to the nucleus. Effector protein for Rho-type GTPases that regulates actin filament reorganization via its interaction with the Arp2/3 complex. Important for efficient actin polymerization. Possible regulator of lymphocyte and platelet function. Mediates actin filament reorganization and the formation of actin pedestals upon infection by pathogenic bacteria. In addition to its role in the cytoplasmic cytoskeleton, also promotes actin polymerization in the nucleus, thereby regulating gene transcription and repair of damaged DNA. Promotes homologous recombination (HR) repair in response to DNA damage by promoting nuclear actin polymerization, leading to drive motility of double-strand breaks (DSBs). This is Actin nucleation-promoting factor WAS (WAS) from Homo sapiens (Human).